A 3354-amino-acid chain; its full sequence is Cadherin-23 (3354 aa).

The first 23 residues, 1–23 (MGRHVATSCHVAWLLVLISGCWG), serve as a signal peptide directing secretion. Residues 24–3064 (QVNRLPFFTN…SVRLPDDMSA (3041 aa)) lie on the Extracellular side of the membrane. Cadherin domains follow at residues 34 to 132 (HFFD…APTF), 133 to 236 (HNQP…DPIF), 237 to 348 (INLP…APEF), 349 to 460 (NSSE…RPIF), 461 to 561 (SQPL…VPTF), 562 to 671 (QKDA…PPTF), 672 to 784 (SKPA…APYY), 779 to 890 (KDAP…DPTF), 891 to 995 (QNLP…TPTF), 996 to 1102 (FPAV…RPIF), 1103 to 1208 (LQSS…APVF), 1210 to 1313 (QQQY…AVQF), 1314 to 1418 (SNAS…SPRF), 1420 to 1527 (FTSD…PPVI), 1529 to 1634 (SPFG…APMF), 1635 to 1744 (QQPH…VPTF), 1745 to 1851 (PRDY…DPVL), 1852 to 1959 (LNLP…HPLF), 1960 to 2069 (TKST…RPTF), 2070 to 2174 (SPAT…RPEF), 2175 to 2293 (LNPI…TPQF), 2297 to 2402 (GITY…NPIF), 2403 to 2509 (DQPS…RPQF), 2510 to 2611 (SKPQ…RPVF), 2614 to 2722 (PPNG…EPLF), 2729 to 2846 (SPQY…PPRF), and 2847 to 2975 (TKAE…EEEF). Residues Asn155 and Asn206 are each glycosylated (N-linked (GlcNAc...) asparagine). N-linked (GlcNAc...) asparagine glycans are attached at residues Asn349, Asn393, Asn434, Asn466, Asn472, Asn652, Asn694, Asn765, Asn810, Asn827, Asn941, Asn1001, Asn1018, Asn1171, Asn1282, Asn1315, Asn1473, Asn1534, Asn1651, Asn1667, Asn1818, Asn1857, Asn1889, Asn1902, Asn2013, Asn2050, Asn2129, Asn2168, Asn2195, Asn2263, Asn2357, and Asn2369. Residues Asn2616, Asn2749, Asn2808, Asn2877, Asn2896, Asn2941, and Asn2981 are each glycosylated (N-linked (GlcNAc...) asparagine). Residues 3065–3085 (LQMAIIVLAILLFLAAMLFVL) form a helical membrane-spanning segment. Topologically, residues 3086 to 3354 (MNWYYRTVHK…METPLEITEL (269 aa)) are cytoplasmic.

As to quaternary structure, antiparallel heterodimer with PCDH15. Interacts with USH1C and USH1G. As to expression, particularly strong expression in the retina. Found also in the cochlea.

Its subcellular location is the cell membrane. Cadherins are calcium-dependent cell adhesion proteins. They preferentially interact with themselves in a homophilic manner in connecting cells. CDH23 is required for establishing and/or maintaining the proper organization of the stereocilia bundle of hair cells in the cochlea and the vestibule during late embryonic/early postnatal development. It is part of the functional network formed by USH1C, USH1G, CDH23 and MYO7A that mediates mechanotransduction in cochlear hair cells. Required for normal hearing. In Homo sapiens (Human), this protein is Cadherin-23.